Here is a 107-residue protein sequence, read N- to C-terminus: Nucleoid-associated protein Hhal_0231 (107 aa).

Disordered regions lie at residues 1-24 and 82-107; these read MKGG…KAQE and VQRE…KLPF. Residues 15 to 24 are compositionally biased toward basic and acidic residues; it reads MQEDMQKAQE.

Belongs to the YbaB/EbfC family. Homodimer.

The protein localises to the cytoplasm. It is found in the nucleoid. Functionally, binds to DNA and alters its conformation. May be involved in regulation of gene expression, nucleoid organization and DNA protection. This chain is Nucleoid-associated protein Hhal_0231, found in Halorhodospira halophila (strain DSM 244 / SL1) (Ectothiorhodospira halophila (strain DSM 244 / SL1)).